The chain runs to 466 residues: ATP synthase subunit beta (466 aa).

Position 148-155 (148-155) interacts with ATP; that stretch reads GGAGVGKT.

It belongs to the ATPase alpha/beta chains family. F-type ATPases have 2 components, CF(1) - the catalytic core - and CF(0) - the membrane proton channel. CF(1) has five subunits: alpha(3), beta(3), gamma(1), delta(1), epsilon(1). CF(0) has three main subunits: a(1), b(2) and c(9-12). The alpha and beta chains form an alternating ring which encloses part of the gamma chain. CF(1) is attached to CF(0) by a central stalk formed by the gamma and epsilon chains, while a peripheral stalk is formed by the delta and b chains.

The protein resides in the cell inner membrane. The catalysed reaction is ATP + H2O + 4 H(+)(in) = ADP + phosphate + 5 H(+)(out). Functionally, produces ATP from ADP in the presence of a proton gradient across the membrane. The catalytic sites are hosted primarily by the beta subunits. This is ATP synthase subunit beta from Herminiimonas arsenicoxydans.